The primary structure comprises 352 residues: Peptide chain release factor 1 (352 aa).

Residue glutamine 233 is modified to N5-methylglutamine. A disordered region spans residues 288-309 (NAKDRKEQVGSGDRSERIRTYN). The segment covering 289 to 306 (AKDRKEQVGSGDRSERIR) has biased composition (basic and acidic residues).

The protein belongs to the prokaryotic/mitochondrial release factor family. In terms of processing, methylated by PrmC. Methylation increases the termination efficiency of RF1.

It localises to the cytoplasm. Functionally, peptide chain release factor 1 directs the termination of translation in response to the peptide chain termination codons UAG and UAA. This chain is Peptide chain release factor 1 (prfA), found in Helicobacter pylori (strain J99 / ATCC 700824) (Campylobacter pylori J99).